The sequence spans 256 residues: Thiazole synthase (256 aa).

Residue lysine 95 is the Schiff-base intermediate with DXP of the active site. 1-deoxy-D-xylulose 5-phosphate is bound by residues glycine 156, 182–183, and 204–205; these read AG and NT.

It belongs to the ThiG family. In terms of assembly, homotetramer. Forms heterodimers with either ThiH or ThiS.

It localises to the cytoplasm. It carries out the reaction [ThiS sulfur-carrier protein]-C-terminal-Gly-aminoethanethioate + 2-iminoacetate + 1-deoxy-D-xylulose 5-phosphate = [ThiS sulfur-carrier protein]-C-terminal Gly-Gly + 2-[(2R,5Z)-2-carboxy-4-methylthiazol-5(2H)-ylidene]ethyl phosphate + 2 H2O + H(+). It participates in cofactor biosynthesis; thiamine diphosphate biosynthesis. Catalyzes the rearrangement of 1-deoxy-D-xylulose 5-phosphate (DXP) to produce the thiazole phosphate moiety of thiamine. Sulfur is provided by the thiocarboxylate moiety of the carrier protein ThiS. In vitro, sulfur can be provided by H(2)S. The protein is Thiazole synthase of Escherichia coli O6:H1 (strain CFT073 / ATCC 700928 / UPEC).